The following is a 106-amino-acid chain: Ribonuclease P protein component 4 (106 aa).

Zn(2+)-binding residues include C63, C66, C89, and C92.

The protein belongs to the eukaryotic/archaeal RNase P protein component 4 family. As to quaternary structure, consists of a catalytic RNA component and at least 4-5 protein subunits. Zn(2+) is required as a cofactor.

It localises to the cytoplasm. The catalysed reaction is Endonucleolytic cleavage of RNA, removing 5'-extranucleotides from tRNA precursor.. In terms of biological role, part of ribonuclease P, a protein complex that generates mature tRNA molecules by cleaving their 5'-ends. In Methanosphaerula palustris (strain ATCC BAA-1556 / DSM 19958 / E1-9c), this protein is Ribonuclease P protein component 4.